The primary structure comprises 319 residues: Ferrochelatase (319 aa).

Positions 194 and 275 each coordinate Fe cation.

It belongs to the ferrochelatase family.

The protein localises to the cytoplasm. The catalysed reaction is heme b + 2 H(+) = protoporphyrin IX + Fe(2+). Its pathway is porphyrin-containing compound metabolism; protoheme biosynthesis; protoheme from protoporphyrin-IX: step 1/1. Catalyzes the ferrous insertion into protoporphyrin IX. The polypeptide is Ferrochelatase (Hamiltonella defensa subsp. Acyrthosiphon pisum (strain 5AT)).